The sequence spans 101 residues: Small ribosomal subunit protein uS14 (101 aa).

This sequence belongs to the universal ribosomal protein uS14 family. In terms of assembly, part of the 30S ribosomal subunit. Contacts proteins S3 and S10.

Its function is as follows. Binds 16S rRNA, required for the assembly of 30S particles and may also be responsible for determining the conformation of the 16S rRNA at the A site. The chain is Small ribosomal subunit protein uS14 from Leifsonia xyli subsp. xyli (strain CTCB07).